Reading from the N-terminus, the 225-residue chain is Ribosome maturation factor RimP (225 aa).

Belongs to the RimP family.

It localises to the cytoplasm. Its function is as follows. Required for maturation of 30S ribosomal subunits. The chain is Ribosome maturation factor RimP from Rhodospirillum rubrum (strain ATCC 11170 / ATH 1.1.1 / DSM 467 / LMG 4362 / NCIMB 8255 / S1).